Reading from the N-terminus, the 610-residue chain is Oxidoreductase ptaE (610 aa).

An N-terminal signal peptide occupies residues 1–20 (MFQSILFLAFYGRPVFGSAA). 2 consecutive Plastocyanin-like domains span residues 67-181 (QIIS…HGPS) and 191-344 (PWLL…IVRY). 10 N-linked (GlcNAc...) asparagine glycosylation sites follow: Asn-105, Asn-111, Asn-262, Asn-277, Asn-330, Asn-356, Asn-401, Asn-409, Asn-427, and Asn-602. Positions 425-568 (YVNWSEPSVK…IAIQFLEQPS (144 aa)) constitute a Plastocyanin-like 3 domain.

Belongs to the multicopper oxidase family.

It functions in the pathway secondary metabolite biosynthesis. Functionally, oxidoreductase; part of the gene cluster that mediates the biosynthesis of pestheic acid, a diphenyl ether which is a biosynthetic precursor of the unique chloropupukeananes. The biosynthesis initiates from condensation of acetate and malonate units catalyzed by the non-reducing PKS ptaA. As the ptaA protein is TE/CLC domain-deficient, hydrolysis and Claisen cyclization of the polyketide could be catalyzed by ptaB containing a beta-lactamase domain. The ptaB protein might hydrolyze the thioester bond between the ACP of ptaA and the intermediate to release atrochrysone carboxylic acid, which is spontaneously dehydrated to form endocrocin anthrone. Endocrocin anthrone is then converted to endocrocin, catalyzed by the anthrone oxygenase ptaC. Spontaneous decarboxylation of endocrocin occurs to generate emodin. An O-methyltransferase (ptaH or ptaI) could methylate emodin to form physcion. PtaJ could then catalyze the oxidative cleavage of physcion, and rotation of the intermediate could then afford desmethylisosulochrin. PtaF, a putative NADH-dependent oxidoreductase, might also participate in the oxidative cleavage step. Desmethylisosulochrin is then transformed by another O-methyltransferase (ptaH or ptaI) to form isosulochrin. Chlorination of isosulochrin by ptaM in the cyclohexadienone B ring then produces chloroisosulochrin. PtaE is responsible for the oxidative coupling reactions of both benzophenones isosulouchrin and chloroisosulochrin to RES-1214-1 and pestheic acid respectively, regardless of chlorination. This chain is Oxidoreductase ptaE, found in Pestalotiopsis fici (strain W106-1 / CGMCC3.15140).